Here is a 327-residue protein sequence, read N- to C-terminus: Phenylalanine--tRNA ligase alpha subunit (327 aa).

Glu252 serves as a coordination point for Mg(2+).

Belongs to the class-II aminoacyl-tRNA synthetase family. Phe-tRNA synthetase alpha subunit type 1 subfamily. As to quaternary structure, tetramer of two alpha and two beta subunits. Mg(2+) serves as cofactor.

The protein localises to the cytoplasm. It carries out the reaction tRNA(Phe) + L-phenylalanine + ATP = L-phenylalanyl-tRNA(Phe) + AMP + diphosphate + H(+). The chain is Phenylalanine--tRNA ligase alpha subunit from Salmonella agona (strain SL483).